The chain runs to 399 residues: Cell division protein FtsZ (399 aa).

GTP contacts are provided by residues 18-22 (GGGVN), 105-107 (GTG), E136, R140, and D184. The segment at 311–399 (GFDGGQPPSK…EELDVPDFLK (89 aa)) is disordered. Acidic residues predominate over residues 388–399 (AAEELDVPDFLK).

The protein belongs to the FtsZ family. In terms of assembly, homodimer. Polymerizes to form a dynamic ring structure in a strictly GTP-dependent manner. Interacts directly with several other division proteins.

It is found in the cytoplasm. In terms of biological role, essential cell division protein that forms a contractile ring structure (Z ring) at the future cell division site. The regulation of the ring assembly controls the timing and the location of cell division. One of the functions of the FtsZ ring is to recruit other cell division proteins to the septum to produce a new cell wall between the dividing cells. Binds GTP and shows GTPase activity. This is Cell division protein FtsZ from Streptomyces coelicolor (strain ATCC BAA-471 / A3(2) / M145).